Here is a 412-residue protein sequence, read N- to C-terminus: Eukaryotic initiation factor 4A-1 (412 aa).

N-acetylalanine is present on Ala-2. The short motif at Glu-39–Gln-67 is the Q motif element. Residues Ile-70 to Ile-240 form the Helicase ATP-binding domain. Ala-83 to Thr-90 lines the ATP pocket. Ser-104 bears the Phosphoserine mark. A Phosphothreonine modification is found at Thr-145. The short motif at Asp-188–Asp-191 is the DEAD box element. Residues Gly-251 to Leu-412 enclose the Helicase C-terminal domain.

The protein belongs to the DEAD box helicase family. eIF4A subfamily. In terms of assembly, eIF4F is a multi-subunit complex, the composition of which varies with external and internal environmental conditions. It is composed of at least EIF4A, EIF4E and EIF4G. Interacts with CDKA-1. Interacts with MRF1, MRF2, MRF3/ECIP1 and MRF4. Highly expressed in the whole plant.

Its subcellular location is the cytoplasm. It catalyses the reaction ATP + H2O = ADP + phosphate + H(+). In terms of biological role, ATP-dependent RNA helicase which is a subunit of the eIF4F complex involved in cap recognition and is required for mRNA binding to ribosome. In the current model of translation initiation, eIF4A unwinds RNA secondary structures in the 5'-UTR of mRNAs which is necessary to allow efficient binding of the small ribosomal subunit, and subsequent scanning for the initiator codon. The polypeptide is Eukaryotic initiation factor 4A-1 (Arabidopsis thaliana (Mouse-ear cress)).